We begin with the raw amino-acid sequence, 453 residues long: Ribulose bisphosphate carboxylase large chain (453 aa).

Positions Met-1–Ser-2 are excised as a propeptide. Pro-3 is subject to N-acetylproline. The residue at position 14 (Lys-14) is an N6,N6,N6-trimethyllysine. Substrate is bound by residues Asn-123 and Thr-173. Lys-175 acts as the Proton acceptor in catalysis. Lys-177 is a binding site for substrate. Residues Lys-201, Asp-203, and Glu-204 each coordinate Mg(2+). The residue at position 201 (Lys-201) is an N6-carboxylysine. His-294 (proton acceptor) is an active-site residue. Arg-295, His-327, and Ser-379 together coordinate substrate.

This sequence belongs to the RuBisCO large chain family. Type I subfamily. As to quaternary structure, heterohexadecamer of 8 large chains and 8 small chains; disulfide-linked. The disulfide link is formed within the large subunit homodimers. Requires Mg(2+) as cofactor. The disulfide bond which can form in the large chain dimeric partners within the hexadecamer appears to be associated with oxidative stress and protein turnover.

It is found in the plastid. Its subcellular location is the chloroplast. It catalyses the reaction 2 (2R)-3-phosphoglycerate + 2 H(+) = D-ribulose 1,5-bisphosphate + CO2 + H2O. The catalysed reaction is D-ribulose 1,5-bisphosphate + O2 = 2-phosphoglycolate + (2R)-3-phosphoglycerate + 2 H(+). RuBisCO catalyzes two reactions: the carboxylation of D-ribulose 1,5-bisphosphate, the primary event in carbon dioxide fixation, as well as the oxidative fragmentation of the pentose substrate in the photorespiration process. Both reactions occur simultaneously and in competition at the same active site. This is Ribulose bisphosphate carboxylase large chain from Galium album (White bedstraw).